The chain runs to 191 residues: Protein GrpE (191 aa).

Basic and acidic residues predominate over residues 1–21 (MSDKKKNAEEFEETFSDKTSE). Positions 1 to 39 (MSDKKKNAEEFEETFSDKTSEDESTVENETVEENENEDV) are disordered. Residues 22–38 (DESTVENETVEENENED) are compositionally biased toward acidic residues.

This sequence belongs to the GrpE family. Homodimer.

The protein resides in the cytoplasm. In terms of biological role, participates actively in the response to hyperosmotic and heat shock by preventing the aggregation of stress-denatured proteins, in association with DnaK and GrpE. It is the nucleotide exchange factor for DnaK and may function as a thermosensor. Unfolded proteins bind initially to DnaJ; upon interaction with the DnaJ-bound protein, DnaK hydrolyzes its bound ATP, resulting in the formation of a stable complex. GrpE releases ADP from DnaK; ATP binding to DnaK triggers the release of the substrate protein, thus completing the reaction cycle. Several rounds of ATP-dependent interactions between DnaJ, DnaK and GrpE are required for fully efficient folding. This Tetragenococcus halophilus (Pediococcus halophilus) protein is Protein GrpE.